Here is a 236-residue protein sequence, read N- to C-terminus: NAP1-binding protein 2 (236 aa).

Residue Ser-102 is modified to Phosphoserine. An SH3 domain is found at 110-171; it reads IVNQRAVALY…PEEFVSYIQP (62 aa). Residues Ser-196 and Ser-235 each carry the phosphoserine modification.

As to quaternary structure, interacts with PBS2 and PTC1.

The protein localises to the cytoplasm. Its function is as follows. Negatively regulates the high-osmolarity glycerol (HOG) pathway through its negative regulation of the HOG1 kinase activity. Mediates the binding between the PTC1 phosphatase and the PBS2 MAP/ERK kinase (MEK). With PTC1, regulates endoplasmic reticulum inheritance through the cell wall integrity (CWI) MAPK pathway by modulating the MAPK, SLT2. The chain is NAP1-binding protein 2 (NBP2) from Saccharomyces cerevisiae (strain ATCC 204508 / S288c) (Baker's yeast).